Reading from the N-terminus, the 298-residue chain is MSTLEHPLIDRFLDALWLEKGLADNTREAYRNDLQQFNAWLDGRGLRLEGIGRDAILDHLAWRLEQGYKARSTARFLSGLRGFYRYCLRDGLIAEDPTLQVDLPQLGKPLPKSLSEADVEALLAAPEVDDPLGLRDRTMLEVLYACGLRVSELVGLTLEQVNLRQGVVKVFGKGSKERLVPLGEEAIGWLERYLREARGDLLGGRPSDVLFPSLRGEQMTRQTFWHRIKHHAQVAAIGTSISPHTLRHAFATHLLNHGADLRVVQMLLGHSDLSTTQIYTHIARARLQDLHARHHPRG.

The region spanning T3–L88 is the Core-binding (CB) domain. One can recognise a Tyr recombinase domain in the interval P109–A292. Active-site residues include R149, K173, H244, R247, and H270. The active-site O-(3'-phospho-DNA)-tyrosine intermediate is Y279.

The protein belongs to the 'phage' integrase family. XerD subfamily. As to quaternary structure, forms a cyclic heterotetrameric complex composed of two molecules of XerC and two molecules of XerD.

It is found in the cytoplasm. Functionally, site-specific tyrosine recombinase, which acts by catalyzing the cutting and rejoining of the recombining DNA molecules. The XerC-XerD complex is essential to convert dimers of the bacterial chromosome into monomers to permit their segregation at cell division. It also contributes to the segregational stability of plasmids. The protein is Tyrosine recombinase XerD of Pseudomonas aeruginosa (strain ATCC 15692 / DSM 22644 / CIP 104116 / JCM 14847 / LMG 12228 / 1C / PRS 101 / PAO1).